The primary structure comprises 406 residues: uncharacterized protein (406 aa).

Belongs to the mycobacterial PPE family.

This is an uncharacterized protein from Mycobacterium tuberculosis (strain CDC 1551 / Oshkosh).